A 682-amino-acid polypeptide reads, in one-letter code: Potassium-transporting ATPase ATP-binding subunit (682 aa).

4 helical membrane passes run 34–54 (PVMF…LAMV), 58–78 (IAGS…TVLF), 219–239 (IALT…TATL), and 254–274 (VLVA…LSAI). The active-site 4-aspartylphosphate intermediate is aspartate 307. ATP-binding positions include aspartate 344, glutamate 348, 377–384 (FTAQSRMS), and lysine 395. The Mg(2+) site is built by aspartate 518 and aspartate 522. A run of 3 helical transmembrane segments spans residues 588–608 (FAII…LNVM), 616–636 (AILS…PLAL), and 662–682 (LVVP…LGLA).

This sequence belongs to the cation transport ATPase (P-type) (TC 3.A.3) family. Type IA subfamily. The system is composed of three essential subunits: KdpA, KdpB and KdpC.

Its subcellular location is the cell inner membrane. It catalyses the reaction K(+)(out) + ATP + H2O = K(+)(in) + ADP + phosphate + H(+). Its function is as follows. Part of the high-affinity ATP-driven potassium transport (or Kdp) system, which catalyzes the hydrolysis of ATP coupled with the electrogenic transport of potassium into the cytoplasm. This subunit is responsible for energy coupling to the transport system and for the release of the potassium ions to the cytoplasm. The polypeptide is Potassium-transporting ATPase ATP-binding subunit (Salmonella agona (strain SL483)).